Consider the following 289-residue polypeptide: ATP synthase gamma chain (289 aa).

The protein belongs to the ATPase gamma chain family. As to quaternary structure, F-type ATPases have 2 components, CF(1) - the catalytic core - and CF(0) - the membrane proton channel. CF(1) has five subunits: alpha(3), beta(3), gamma(1), delta(1), epsilon(1). CF(0) has three main subunits: a, b and c.

The protein resides in the cell membrane. In terms of biological role, produces ATP from ADP in the presence of a proton gradient across the membrane. The gamma chain is believed to be important in regulating ATPase activity and the flow of protons through the CF(0) complex. The sequence is that of ATP synthase gamma chain from Lawsonia intracellularis (strain PHE/MN1-00).